The chain runs to 186 residues: Elongation factor P (186 aa).

The protein belongs to the elongation factor P family.

The protein localises to the cytoplasm. Its pathway is protein biosynthesis; polypeptide chain elongation. In terms of biological role, involved in peptide bond synthesis. Stimulates efficient translation and peptide-bond synthesis on native or reconstituted 70S ribosomes in vitro. Probably functions indirectly by altering the affinity of the ribosome for aminoacyl-tRNA, thus increasing their reactivity as acceptors for peptidyl transferase. The chain is Elongation factor P from Polynucleobacter necessarius subsp. necessarius (strain STIR1).